The following is a 287-amino-acid chain: Elongation factor Ts (287 aa).

The segment at 80-83 (TDFL) is involved in Mg(2+) ion dislocation from EF-Tu.

It belongs to the EF-Ts family.

Its subcellular location is the cytoplasm. Its function is as follows. Associates with the EF-Tu.GDP complex and induces the exchange of GDP to GTP. It remains bound to the aminoacyl-tRNA.EF-Tu.GTP complex up to the GTP hydrolysis stage on the ribosome. This is Elongation factor Ts from Pseudomonas fluorescens (strain Pf0-1).